A 227-amino-acid polypeptide reads, in one-letter code: Probable septum site-determining protein MinC (227 aa).

This sequence belongs to the MinC family. As to quaternary structure, interacts with MinD and FtsZ.

Functionally, cell division inhibitor that blocks the formation of polar Z ring septums. Rapidly oscillates between the poles of the cell to destabilize FtsZ filaments that have formed before they mature into polar Z rings. Prevents FtsZ polymerization. The protein is Probable septum site-determining protein MinC of Photorhabdus laumondii subsp. laumondii (strain DSM 15139 / CIP 105565 / TT01) (Photorhabdus luminescens subsp. laumondii).